A 213-amino-acid polypeptide reads, in one-letter code: Nicotinate-nucleotide adenylyltransferase (213 aa).

The protein belongs to the NadD family.

It carries out the reaction nicotinate beta-D-ribonucleotide + ATP + H(+) = deamido-NAD(+) + diphosphate. It functions in the pathway cofactor biosynthesis; NAD(+) biosynthesis; deamido-NAD(+) from nicotinate D-ribonucleotide: step 1/1. Functionally, catalyzes the reversible adenylation of nicotinate mononucleotide (NaMN) to nicotinic acid adenine dinucleotide (NaAD). This chain is Nicotinate-nucleotide adenylyltransferase, found in Salmonella typhimurium (strain LT2 / SGSC1412 / ATCC 700720).